A 480-amino-acid polypeptide reads, in one-letter code: RuvB-like helicase 2 (480 aa).

Residue 76 to 83 coordinates ATP; that stretch reads GPPSTGKT.

This sequence belongs to the RuvB family. In terms of assembly, may form heterododecamers with RVB1. Component of the SWR1 chromatin remodeling complex, the INO80 chromatin remodeling complex, and of the R2TP complex.

It localises to the nucleus. It catalyses the reaction ATP + H2O = ADP + phosphate + H(+). DNA helicase which participates in several chromatin remodeling complexes, including the SWR1 and the INO80 complexes. The SWR1 complex mediates the ATP-dependent exchange of histone H2A for the H2A variant HZT1 leading to transcriptional regulation of selected genes by chromatin remodeling. The INO80 complex remodels chromatin by shifting nucleosomes and is involved in DNA repair. Also involved in pre-rRNA processing. This Debaryomyces hansenii (strain ATCC 36239 / CBS 767 / BCRC 21394 / JCM 1990 / NBRC 0083 / IGC 2968) (Yeast) protein is RuvB-like helicase 2 (RVB2).